A 345-amino-acid polypeptide reads, in one-letter code: NADH-ubiquinone oxidoreductase chain 2 (345 aa).

The next 10 membrane-spanning stretches (helical) occupy residues 1–21, 25–45, 56–76, 92–114, 149–171, 178–198, 200–220, 241–261, 274–294, and 324–344; these read MNPI…VITM, NLML…PMLI, ATKY…AIVL, GLIL…FHFW, LNST…GGLN, IMAY…PYNP, LTLL…MALM, LTMI…TGFL, NCLI…FFYT, and LMFS…PQLI.

It belongs to the complex I subunit 2 family. In terms of assembly, core subunit of respiratory chain NADH dehydrogenase (Complex I) which is composed of 45 different subunits. Interacts with TMEM242.

It is found in the mitochondrion inner membrane. It catalyses the reaction a ubiquinone + NADH + 5 H(+)(in) = a ubiquinol + NAD(+) + 4 H(+)(out). Core subunit of the mitochondrial membrane respiratory chain NADH dehydrogenase (Complex I) which catalyzes electron transfer from NADH through the respiratory chain, using ubiquinone as an electron acceptor. Essential for the catalytic activity and assembly of complex I. The polypeptide is NADH-ubiquinone oxidoreductase chain 2 (Mus musculus (Mouse)).